A 159-amino-acid polypeptide reads, in one-letter code: MKVKLICVGKLKERYLKDGISEYQKRLSRFCQFEMIELTDERTPDKANFADNQLIMSKEAQRIHKKIGERDFVIALAIEGKQFPSETFSELISGVTVKGYSTITFIIGGSLGLDSIIKKRADMLMSFGLLTLPHQLMRLVLTEQIYRAFMITKGSPYHK.

Residues Leu76, Gly108, and 127 to 132 (FGLLTL) each bind S-adenosyl-L-methionine.

It belongs to the RNA methyltransferase RlmH family. As to quaternary structure, homodimer.

Its subcellular location is the cytoplasm. The catalysed reaction is pseudouridine(1915) in 23S rRNA + S-adenosyl-L-methionine = N(3)-methylpseudouridine(1915) in 23S rRNA + S-adenosyl-L-homocysteine + H(+). Specifically methylates the pseudouridine at position 1915 (m3Psi1915) in 23S rRNA. The polypeptide is Ribosomal RNA large subunit methyltransferase H (Streptococcus pyogenes serotype M18 (strain MGAS8232)).